The chain runs to 84 residues: Large ribosomal subunit protein bL27 (84 aa).

Residues 1-21 (MAHKKGGGSTKNGRDSNPKYL) form a disordered region.

This sequence belongs to the bacterial ribosomal protein bL27 family.

The polypeptide is Large ribosomal subunit protein bL27 (Chlorobium limicola (strain DSM 245 / NBRC 103803 / 6330)).